A 387-amino-acid chain; its full sequence is 3-ketoacyl-CoA thiolase (387 aa).

The active-site Acyl-thioester intermediate is cysteine 91. Active-site proton acceptor residues include histidine 343 and cysteine 373.

It belongs to the thiolase-like superfamily. Thiolase family. Heterotetramer of two alpha chains (FadB) and two beta chains (FadA).

It localises to the cytoplasm. The enzyme catalyses an acyl-CoA + acetyl-CoA = a 3-oxoacyl-CoA + CoA. It participates in lipid metabolism; fatty acid beta-oxidation. Functionally, catalyzes the final step of fatty acid oxidation in which acetyl-CoA is released and the CoA ester of a fatty acid two carbons shorter is formed. The chain is 3-ketoacyl-CoA thiolase from Erwinia tasmaniensis (strain DSM 17950 / CFBP 7177 / CIP 109463 / NCPPB 4357 / Et1/99).